Consider the following 414-residue polypeptide: Membrane protein UL43 (414 aa).

Helical transmembrane passes span 39–59 (GFAHLWLQAATLGFVGSVVLS), 61–81 (GPYADAMSGAFVIGSTGLGFL), 96–116 (AWLRLVGGGAAVALWSLGEAG), 121–141 (VPGPATQCLALGAAYAALLVL), 148–168 (LFLLAPRPLFVGTLGVVVGGL), and 184–204 (AAALTAAVVAGLGTTAAGDSF). The tract at residues 225–253 (PRYAPEDAERPTDHGPLLPSTHHQRSPRV) is disordered. Over residues 228 to 237 (APEDAERPTD) the composition is skewed to basic and acidic residues. 2 helical membrane-spanning segments follow: residues 339–359 (GLMFVVPDIAVYAMLGGAVWI) and 383–403 (ATLRGLFFSVYALGFAAGVLV).

This sequence belongs to the alphaherpesvirinae HHV-1 UL43 family.

The protein resides in the membrane. The polypeptide is Membrane protein UL43 (Homo sapiens (Human)).